The chain runs to 488 residues: Inosine-5'-monophosphate dehydrogenase (488 aa).

2 consecutive CBS domains span residues 94-150 (IVSE…SKTV) and 154-215 (MTKK…CKDE). NAD(+) is bound by residues D249, 249–251 (DSS), and 299–301 (GIG). 2 residues coordinate K(+): G301 and G303. S304 contacts IMP. C306 is a K(+) binding site. C306 serves as the catalytic Thioimidate intermediate. Residues 339-341 (DGG), 362-363 (GS), and 386-390 (YRGMG) contribute to the IMP site. R402 functions as the Proton acceptor in the catalytic mechanism. IMP is bound at residue E416. 3 residues coordinate K(+): E470, S471, and H472.

Belongs to the IMPDH/GMPR family. Homotetramer. K(+) is required as a cofactor.

It carries out the reaction IMP + NAD(+) + H2O = XMP + NADH + H(+). The protein operates within purine metabolism; XMP biosynthesis via de novo pathway; XMP from IMP: step 1/1. Mycophenolic acid (MPA) is a non-competitive inhibitor that prevents formation of the closed enzyme conformation by binding to the same site as the amobile flap. In contrast, mizoribine monophosphate (MZP) is a competitive inhibitor that induces the closed conformation. MPA is a potent inhibitor of mammalian IMPDHs but a poor inhibitor of the bacterial enzymes. MZP is a more potent inhibitor of bacterial IMPDH. Functionally, catalyzes the conversion of inosine 5'-phosphate (IMP) to xanthosine 5'-phosphate (XMP), the first committed and rate-limiting step in the de novo synthesis of guanine nucleotides, and therefore plays an important role in the regulation of cell growth. This chain is Inosine-5'-monophosphate dehydrogenase, found in Haemophilus influenzae (strain ATCC 51907 / DSM 11121 / KW20 / Rd).